Consider the following 178-residue polypeptide: Ribulose bisphosphate carboxylase small subunit, chloroplastic (178 aa).

A chloroplast-targeting transit peptide spans 1 to 54 (MALISSAAVTTINRAPVQANLATPFTGLKSSAGFPVTKKNNDITSITSNGSRVN).

It belongs to the RuBisCO small chain family. As to quaternary structure, heterohexadecamer of 8 large and 8 small subunits.

Its subcellular location is the plastid. The protein resides in the chloroplast. Its function is as follows. RuBisCO catalyzes two reactions: the carboxylation of D-ribulose 1,5-bisphosphate, the primary event in carbon dioxide fixation, as well as the oxidative fragmentation of the pentose substrate. Both reactions occur simultaneously and in competition at the same active site. Although the small subunit is not catalytic it is essential for maximal activity. The sequence is that of Ribulose bisphosphate carboxylase small subunit, chloroplastic from Trifolium repens (Creeping white clover).